The following is a 430-amino-acid chain: Phosphomethylpyrimidine synthase (430 aa).

Residues Asn67, Met96, Tyr125, His161, 183 to 185 (SRG), 224 to 227 (DALR), and Glu263 contribute to the substrate site. Residue His267 participates in Zn(2+) binding. Tyr290 provides a ligand contact to substrate. His331 is a Zn(2+) binding site. 3 residues coordinate [4Fe-4S] cluster: Cys406, Cys409, and Cys413.

The protein belongs to the ThiC family. Homodimer. The cofactor is [4Fe-4S] cluster.

The catalysed reaction is 5-amino-1-(5-phospho-beta-D-ribosyl)imidazole + S-adenosyl-L-methionine = 4-amino-2-methyl-5-(phosphooxymethyl)pyrimidine + CO + 5'-deoxyadenosine + formate + L-methionine + 3 H(+). Its pathway is cofactor biosynthesis; thiamine diphosphate biosynthesis. Functionally, catalyzes the synthesis of the hydroxymethylpyrimidine phosphate (HMP-P) moiety of thiamine from aminoimidazole ribotide (AIR) in a radical S-adenosyl-L-methionine (SAM)-dependent reaction. The protein is Phosphomethylpyrimidine synthase of Campylobacter jejuni subsp. jejuni serotype O:2 (strain ATCC 700819 / NCTC 11168).